Reading from the N-terminus, the 423-residue chain is Transmembrane protein 130 (423 aa).

An N-terminal signal peptide occupies residues 1–24 (MAQAVWSRLGRILWLSCLLPWAPA). The Extracellular portion of the chain corresponds to 25–339 (GVAAGLYELN…IQVWPSRIQP (315 aa)). N34, N197, and N300 each carry an N-linked (GlcNAc...) asparagine glycan. The PKD domain maps to 147 to 233 (WPSSYLTKTI…AVMQKTGDFS (87 aa)). A helical membrane pass occupies residues 340 to 360 (AVFAFPCATLITVMLAFIMYM). Over 361-423 (TLRNATQQKD…LYKSVKTYTV (63 aa)) the chain is Cytoplasmic.

The protein localises to the golgi apparatus membrane. The chain is Transmembrane protein 130 (TMEM130) from Pongo abelii (Sumatran orangutan).